A 494-amino-acid chain; its full sequence is 4-hydroxyphenylacetate 3-monooxygenase oxygenase component (494 aa).

Substrate contacts are provided by residues Arg-103–Tyr-107 and His-149. FAD-binding positions include His-149–Leu-151, Gln-155–Arg-158, and Thr-192. A substrate-binding site is contributed by Ser-205–Thr-206. Residue Asp-455–Arg-458 participates in FAD binding.

This sequence belongs to the FADH(2)-utilizing monooxygenase family. 4-HPA 3-monooxygenase consists of a reductase component HpaI and an oxygenase component HpaH.

The catalysed reaction is 4-hydroxyphenylacetate + FADH2 + O2 = 3,4-dihydroxyphenylacetate + FAD + H2O + H(+). It participates in aromatic compound metabolism; 4-hydroxyphenylacetate degradation; pyruvate and succinate semialdehyde from 4-hydroxyphenylacetate: step 1/7. In terms of biological role, utilizes FADH(2) supplied by HpaI, to catalyze the hydroxylation of 4-hydroxyphenylacetic acid, leading to the production of 3,4-dihydroxyphenylacetic acid (DHPA). This Geobacillus sp. (strain PA-9) protein is 4-hydroxyphenylacetate 3-monooxygenase oxygenase component (hpaH).